A 107-amino-acid polypeptide reads, in one-letter code: Metallothionein-1 (107 aa).

A propeptide spanning residues 1-2 (MD) is cleaved from the precursor.

Belongs to the metallothionein superfamily. Type 7 family.

The metallothioneins are involved in the cellular sequestration of toxic metal ions. Binds 12 cadmium ions per molecule. The sequence is that of Metallothionein-1 from Tetrahymena pigmentosa.